The following is an 825-amino-acid chain: Penicillin-binding protein 1A (825 aa).

The Cytoplasmic segment spans residues 1 to 6; it reads MKFIKR. The chain crosses the membrane as a helical; Signal-anchor for type II membrane protein span at residues 7 to 27; it reads LLVFSLICIILGVTTIFGFYF. At 28–825 the chain is on the periplasmic side; the sequence is YVKSDLPDVA…YSTSSGEELF (798 aa). The tract at residues 48 to 216 is transglycosylase; that stretch reads MQVFSQDGKL…STMNPIYSVE (169 aa). Glutamate 86 serves as the catalytic Proton donor; for transglycosylase activity. Positions 413–752 are transpeptidase; that stretch reads PRTQDGAITA…GKTALPAWVE (340 aa). The Acyl-ester intermediate; for transpeptidase activity role is filled by serine 471.

The protein in the N-terminal section; belongs to the glycosyltransferase 51 family. It in the C-terminal section; belongs to the transpeptidase family.

The protein localises to the cell inner membrane. The catalysed reaction is [GlcNAc-(1-&gt;4)-Mur2Ac(oyl-L-Ala-gamma-D-Glu-L-Lys-D-Ala-D-Ala)](n)-di-trans,octa-cis-undecaprenyl diphosphate + beta-D-GlcNAc-(1-&gt;4)-Mur2Ac(oyl-L-Ala-gamma-D-Glu-L-Lys-D-Ala-D-Ala)-di-trans,octa-cis-undecaprenyl diphosphate = [GlcNAc-(1-&gt;4)-Mur2Ac(oyl-L-Ala-gamma-D-Glu-L-Lys-D-Ala-D-Ala)](n+1)-di-trans,octa-cis-undecaprenyl diphosphate + di-trans,octa-cis-undecaprenyl diphosphate + H(+). It carries out the reaction Preferential cleavage: (Ac)2-L-Lys-D-Ala-|-D-Ala. Also transpeptidation of peptidyl-alanyl moieties that are N-acyl substituents of D-alanine.. The protein operates within cell wall biogenesis; peptidoglycan biosynthesis. Its function is as follows. Cell wall formation. Synthesis of cross-linked peptidoglycan from the lipid intermediates. The enzyme has a penicillin-insensitive transglycosylase N-terminal domain (formation of linear glycan strands) and a penicillin-sensitive transpeptidase C-terminal domain (cross-linking of the peptide subunits). This Vibrio cholerae serotype O1 (strain ATCC 39315 / El Tor Inaba N16961) protein is Penicillin-binding protein 1A (mrcA).